The following is a 316-amino-acid chain: Cysteine synthase (316 aa).

Residues N7 and R35 each contribute to the hydrogen sulfide site. At K42 the chain carries N6-(pyridoxal phosphate)lysine. Pyridoxal 5'-phosphate contacts are provided by residues N72 and G177 to S181. L268 is a binding site for hydrogen sulfide. Position 272 (S272) interacts with pyridoxal 5'-phosphate.

The protein belongs to the cysteine synthase/cystathionine beta-synthase family. In terms of assembly, homodimer. It depends on pyridoxal 5'-phosphate as a cofactor.

The catalysed reaction is O-acetyl-L-serine + hydrogen sulfide = L-cysteine + acetate. The protein operates within amino-acid biosynthesis; L-cysteine biosynthesis; L-cysteine from L-serine: step 2/2. The sequence is that of Cysteine synthase (cysK) from Haemophilus influenzae (strain ATCC 51907 / DSM 11121 / KW20 / Rd).